The chain runs to 326 residues: Vitamin B12 import system permease protein BtuC (326 aa).

The next 9 membrane-spanning stretches (helical) occupy residues 15-35 (WLLC…CAGE), 61-81 (LAVL…QALF), 88-108 (PGLL…VLLG), 112-132 (LPNW…TLIL), 146-166 (LLAG…AIYF), 184-204 (GGVD…LLWI), 240-260 (GWMV…GLVI), 274-294 (VLLP…DIVA), and 302-322 (ELPI…WLLL).

This sequence belongs to the binding-protein-dependent transport system permease family. FecCD subfamily. As to quaternary structure, the complex is composed of two ATP-binding proteins (BtuD), two transmembrane proteins (BtuC) and a solute-binding protein (BtuF).

It is found in the cell inner membrane. Its function is as follows. Part of the ABC transporter complex BtuCDF involved in vitamin B12 import. Involved in the translocation of the substrate across the membrane. The chain is Vitamin B12 import system permease protein BtuC from Escherichia coli O7:K1 (strain IAI39 / ExPEC).